Consider the following 185-residue polypeptide: Elongation factor P (185 aa).

Belongs to the elongation factor P family.

It is found in the cytoplasm. Its pathway is protein biosynthesis; polypeptide chain elongation. In terms of biological role, involved in peptide bond synthesis. Stimulates efficient translation and peptide-bond synthesis on native or reconstituted 70S ribosomes in vitro. Probably functions indirectly by altering the affinity of the ribosome for aminoacyl-tRNA, thus increasing their reactivity as acceptors for peptidyl transferase. The sequence is that of Elongation factor P from Burkholderia cenocepacia (strain HI2424).